The sequence spans 375 residues: Queuine tRNA-ribosyltransferase (375 aa).

Aspartate 90 serves as the catalytic Proton acceptor. Substrate-binding positions include 90-94 (DSGGF), aspartate 144, glutamine 190, and glycine 217. Residues 248–254 (GIGTPHY) are RNA binding. The active-site Nucleophile is the aspartate 267. The interval 272–276 (ARITR) is RNA binding; important for wobble base 34 recognition. Residues cysteine 305, cysteine 307, cysteine 310, and histidine 336 each coordinate Zn(2+).

This sequence belongs to the queuine tRNA-ribosyltransferase family. Homodimer. Within each dimer, one monomer is responsible for RNA recognition and catalysis, while the other monomer binds to the replacement base PreQ1. It depends on Zn(2+) as a cofactor.

The enzyme catalyses 7-aminomethyl-7-carbaguanine + guanosine(34) in tRNA = 7-aminomethyl-7-carbaguanosine(34) in tRNA + guanine. It functions in the pathway tRNA modification; tRNA-queuosine biosynthesis. Catalyzes the base-exchange of a guanine (G) residue with the queuine precursor 7-aminomethyl-7-deazaguanine (PreQ1) at position 34 (anticodon wobble position) in tRNAs with GU(N) anticodons (tRNA-Asp, -Asn, -His and -Tyr). Catalysis occurs through a double-displacement mechanism. The nucleophile active site attacks the C1' of nucleotide 34 to detach the guanine base from the RNA, forming a covalent enzyme-RNA intermediate. The proton acceptor active site deprotonates the incoming PreQ1, allowing a nucleophilic attack on the C1' of the ribose to form the product. After dissociation, two additional enzymatic reactions on the tRNA convert PreQ1 to queuine (Q), resulting in the hypermodified nucleoside queuosine (7-(((4,5-cis-dihydroxy-2-cyclopenten-1-yl)amino)methyl)-7-deazaguanosine). In Borreliella burgdorferi (strain ATCC 35210 / DSM 4680 / CIP 102532 / B31) (Borrelia burgdorferi), this protein is Queuine tRNA-ribosyltransferase.